Reading from the N-terminus, the 189-residue chain is Elongation factor P (189 aa).

The protein belongs to the elongation factor P family.

The protein localises to the cytoplasm. It participates in protein biosynthesis; polypeptide chain elongation. Functionally, involved in peptide bond synthesis. Stimulates efficient translation and peptide-bond synthesis on native or reconstituted 70S ribosomes in vitro. Probably functions indirectly by altering the affinity of the ribosome for aminoacyl-tRNA, thus increasing their reactivity as acceptors for peptidyl transferase. This is Elongation factor P from Orientia tsutsugamushi (strain Ikeda) (Rickettsia tsutsugamushi).